Consider the following 136-residue polypeptide: Aspartate 1-decarboxylase (136 aa).

The Schiff-base intermediate with substrate; via pyruvic acid role is filled by S25. S25 bears the Pyruvic acid (Ser) mark. Residue T57 coordinates substrate. Y58 functions as the Proton donor in the catalytic mechanism. Residue 73–75 (GAA) participates in substrate binding.

The protein belongs to the PanD family. In terms of assembly, heterooctamer of four alpha and four beta subunits. Pyruvate serves as cofactor. Post-translationally, is synthesized initially as an inactive proenzyme, which is activated by self-cleavage at a specific serine bond to produce a beta-subunit with a hydroxyl group at its C-terminus and an alpha-subunit with a pyruvoyl group at its N-terminus.

Its subcellular location is the cytoplasm. It catalyses the reaction L-aspartate + H(+) = beta-alanine + CO2. The protein operates within cofactor biosynthesis; (R)-pantothenate biosynthesis; beta-alanine from L-aspartate: step 1/1. Functionally, catalyzes the pyruvoyl-dependent decarboxylation of aspartate to produce beta-alanine. The sequence is that of Aspartate 1-decarboxylase from Corynebacterium glutamicum (strain R).